The primary structure comprises 596 residues: MSGLTSVAQAEDLWRKIQLRRCKREQERLKPPDVELRDGDFRLRGLVAGERLLEWEFIENETGVATLQLSLSHYLAKWVMNHRGRAKRNVILNVEKQGARWSGMMDHYRVVKEDSGDCYLEIVFLHDFEQTKHIRVWCNPFLRPELQFPKIWIIFGPAKWCLLVTLFVNLLRLETSLWTIPDDPTDIWEWMGPSFNPSKWRNIVKPFPFLLDNSPITMVFSRFGTFYDTAKQILENHQLTLTCRRYIKDRDPHPFDDLKGLWGIDPVEGLLQLIPLRDGCVVWDIEDNSGWGTETAFGGSWLTGFVRAVVNLAGDGQVEGVDVFTGDYTFPGEYYSPWFLGTSPRAPHVVFEEGPLTGIKSSEFSYYEATDTSFLAGGQSAPGINEGISALVNIGGDLLTSFINSQLAVLGAVGGAIDLPPLGGLMDAVLNPLYSDVFGAFMEVPTLRAMGISLPIAGLEDIVTGLGDFHYYENMVDSPMKAFTLSAFAAIAAQIHKTRARTAHTLKVSDAAPYIFAPKPYGHCWIGDRVGTSVLGYPVEHQLFVERIRKVKYRIDKDGMKPLEIEIGYREPKNPALHILEEIKRFNGAMGQAGIL.

The chain is Minor tail protein Gp28 (28) from Mycobacterium phage D29 (Mycobacteriophage D29).